The following is a 404-amino-acid chain: Acetate kinase (404 aa).

Residue Asn8 participates in Mg(2+) binding. Lys15 provides a ligand contact to ATP. Arg92 serves as a coordination point for substrate. The active-site Proton donor/acceptor is the Asp149. Residues 207-211 (HLGSG), 282-284 (DMR), and 327-331 (GIGEN) contribute to the ATP site. Glu378 serves as a coordination point for Mg(2+).

This sequence belongs to the acetokinase family. Homodimer. Mg(2+) serves as cofactor. Mn(2+) is required as a cofactor.

The protein resides in the cytoplasm. The enzyme catalyses acetate + ATP = acetyl phosphate + ADP. Its pathway is metabolic intermediate biosynthesis; acetyl-CoA biosynthesis; acetyl-CoA from acetate: step 1/2. In terms of biological role, catalyzes the formation of acetyl phosphate from acetate and ATP. Can also catalyze the reverse reaction. The chain is Acetate kinase from Nitrobacter hamburgensis (strain DSM 10229 / NCIMB 13809 / X14).